The following is a 127-amino-acid chain: MMRSQSKYTSYFFFLILFYFCIISSFLFLFIFLGRGYLNQQYSTITCLPTFKFSTFLLNTISSPQVVKLDEGFAGVKLVGKENFVCSQIHQFSSYKVYIFRVNTKDFGKVFICRFHGNVFHIESICG.

The helical transmembrane segment at 12-32 (FFFLILFYFCIISSFLFLFIF) threads the bilayer.

It localises to the membrane. This is an uncharacterized protein from Saccharomyces cerevisiae (strain ATCC 204508 / S288c) (Baker's yeast).